A 334-amino-acid chain; its full sequence is Immune-associated nucleotide-binding protein 3 (334 aa).

Positions 11-219 constitute an AIG1-type G domain; the sequence is KAVKNIVLVG…FRGKMYLEIK (209 aa). The tract at residues 20-27 is G1; the sequence is GRTGNGKS. Residues 20-28 and Ser-41 each bind GTP; that span reads GRTGNGKSA. The segment at 47–51 is G2; the sequence is GVTKT. Residues 69–72 are G3; sequence DTPG. Residues 139–142 form a G4 region; that stretch reads TGGD. A G5 region spans residues 178 to 180; the sequence is NNM. Asn-179 serves as a coordination point for GTP. A coiled-coil region spans residues 272-306; that stretch reads SAAHERMVSMLNENLENAHRENIDLRKAHDHEQKK.

It belongs to the TRAFAC class TrmE-Era-EngA-EngB-Septin-like GTPase superfamily. AIG1/Toc34/Toc159-like paraseptin GTPase family. IAN subfamily. As to expression, mostly expressed in pollen. Also detected in lateral roots and radicles.

This Arabidopsis thaliana (Mouse-ear cress) protein is Immune-associated nucleotide-binding protein 3.